A 552-amino-acid polypeptide reads, in one-letter code: Pyrophosphate--fructose 6-phosphate 1-phosphotransferase subunit beta (552 aa).

Gly-90 provides a ligand contact to diphosphate. Asp-184 is a Mg(2+) binding site. Residues 212 to 214, 251 to 252, 259 to 261, Glu-320, and 425 to 428 contribute to the substrate site; these read TID, KY, MGR, and YEGR. Catalysis depends on Asp-214, which acts as the Proton acceptor.

The protein belongs to the phosphofructokinase type A (PFKA) family. PPi-dependent PFK group II subfamily. Clade 'Long' sub-subfamily. In terms of assembly, tetramer of two alpha (regulatory) and two beta (catalytic) chains. Requires Mg(2+) as cofactor.

It localises to the cytoplasm. The enzyme catalyses beta-D-fructose 6-phosphate + diphosphate = beta-D-fructose 1,6-bisphosphate + phosphate + H(+). It functions in the pathway carbohydrate degradation; glycolysis; D-glyceraldehyde 3-phosphate and glycerone phosphate from D-glucose: step 3/4. Allosterically activated by fructose 2,6-bisphosphate. Catalytic subunit of pyrophosphate--fructose 6-phosphate 1-phosphotransferase. Catalyzes the phosphorylation of D-fructose 6-phosphate, the first committing step of glycolysis. Uses inorganic phosphate (PPi) as phosphoryl donor instead of ATP like common ATP-dependent phosphofructokinases (ATP-PFKs), which renders the reaction reversible, and can thus function both in glycolysis and gluconeogenesis. This Ricinus communis (Castor bean) protein is Pyrophosphate--fructose 6-phosphate 1-phosphotransferase subunit beta.